A 193-amino-acid chain; its full sequence is Probable nicotinate-nucleotide adenylyltransferase (193 aa).

The protein belongs to the NadD family.

The catalysed reaction is nicotinate beta-D-ribonucleotide + ATP + H(+) = deamido-NAD(+) + diphosphate. Its pathway is cofactor biosynthesis; NAD(+) biosynthesis; deamido-NAD(+) from nicotinate D-ribonucleotide: step 1/1. In terms of biological role, catalyzes the reversible adenylation of nicotinate mononucleotide (NaMN) to nicotinic acid adenine dinucleotide (NaAD). In Flavobacterium johnsoniae (strain ATCC 17061 / DSM 2064 / JCM 8514 / BCRC 14874 / CCUG 350202 / NBRC 14942 / NCIMB 11054 / UW101) (Cytophaga johnsonae), this protein is Probable nicotinate-nucleotide adenylyltransferase.